Consider the following 343-residue polypeptide: Coiled-coil domain-containing protein 97 (343 aa).

Met1 is subject to N-acetylmethionine. Residues 1-37 (MEAVATATAAKEPDKGCIEPGPGHWGELSRTPVPSKP) form a disordered region. Thr47 is subject to Phosphothreonine. Disordered regions lie at residues 200 to 220 (ARTPTHQPPKPGSPGRPACPL), 234 to 277 (QQRL…DSEE), and 292 to 343 (RFLD…LDGD). Positions 224–262 (LLQSYEERELQQRLLQQQEEEEACLEEEEEEEDSDEEDQ) form a coiled coil. Acidic residues predominate over residues 241-261 (QEEEEACLEEEEEEEDSDEED). Basic and acidic residues predominate over residues 262–277 (QRSGKDSEAWVPDSEE). 2 positions are modified to phosphoserine: Ser275 and Ser337. A compositionally biased stretch (acidic residues) spans 324–343 (ERYFDEEEPEDAPSPELDGD).

Associates with splicing factor SF3B complex, involved in branch-site recognition.

Its subcellular location is the nucleus. In terms of biological role, may play a role pre-mRNA splicing through the association with the splicing factor SF3B complex which is involved in branch-site recognition. The chain is Coiled-coil domain-containing protein 97 (CCDC97) from Homo sapiens (Human).